The primary structure comprises 163 residues: Shikimate kinase (163 aa).

ATP is bound at residue 10 to 15 (GVGKSS). Ser-14 lines the Mg(2+) pocket. Residues Asp-28, Arg-52, and Gly-75 each contribute to the substrate site. Arg-116 contributes to the ATP binding site. Residue Arg-134 participates in substrate binding. An ATP-binding site is contributed by Arg-151.

It belongs to the shikimate kinase family. As to quaternary structure, monomer. Mg(2+) serves as cofactor.

Its subcellular location is the cytoplasm. The catalysed reaction is shikimate + ATP = 3-phosphoshikimate + ADP + H(+). It participates in metabolic intermediate biosynthesis; chorismate biosynthesis; chorismate from D-erythrose 4-phosphate and phosphoenolpyruvate: step 5/7. Functionally, catalyzes the specific phosphorylation of the 3-hydroxyl group of shikimic acid using ATP as a cosubstrate. The sequence is that of Shikimate kinase from Streptococcus thermophilus (strain ATCC BAA-491 / LMD-9).